The chain runs to 709 residues: UV-stimulated scaffold protein A (709 aa).

Positions 1 to 10 (MDQKLSKLVE) are enriched in basic and acidic residues. Positions 1 to 20 (MDQKLSKLVEELTTSGEPRL) are disordered. A VHS-like region spans residues 2–145 (DQKLSKLVEE…HFLRHNKKVD (144 aa)). Positions 165–199 (KHLDKIYQERASQAEREMQEMSGEIESCLTEVESC) form a coiled coil. Disordered stretches follow at residues 230–289 (SCAG…DSDL) and 386–406 (EGGE…EDDE). The span at 280 to 289 (PSDEDEDSDL) shows a compositional bias: acidic residues. Ser-281 and Ser-287 each carry phosphoserine. The segment covering 386 to 395 (EGGERRRTEA) has biased composition (basic and acidic residues). Positions 397–406 (GDAEEDEDDE) are enriched in acidic residues. Lys-414 is covalently cross-linked (Glycyl lysine isopeptide (Lys-Gly) (interchain with G-Cter in ubiquitin)). The tract at residues 469 to 495 (DHLPPPSSASPSRALPEPQEAQKLAAE) is disordered. Positions 477-486 (ASPSRALPEP) are enriched in low complexity. Residues 564 to 591 (QHWCRAPRPDGRLCERQDRLKCPFHGKI) form a UVSSA-type zinc finger. Zn(2+) contacts are provided by Cys-567, Cys-577, Cys-585, and His-588. The interval 588 to 655 (HGKIVPRDDE…GKGRGKKRRY (68 aa)) is disordered. A compositionally biased stretch (basic and acidic residues) spans 592-632 (VPRDDEGRPLDPEDRAREQRRQLQKQERPEWQDPELMRDVE). A compositionally biased stretch (basic residues) spans 646-655 (GKGRGKKRRY).

Belongs to the UVSSA family. Interacts with the elongating form of RNA polymerase II (RNA pol IIo) during transcription stress. Interacts with the TFIIH complex during transcription stress. Interacts with ERCC6. Interacts with ERCC8. Interacts with USP7. Post-translationally, monoubiquitinated at Lys-414 in response to transcription stress; this promotes efficient transfer of TFIIH to stalled RNA polymerase II.

Its subcellular location is the chromosome. Factor involved in transcription-coupled nucleotide excision repair (TC-NER), a mechanism that rapidly removes RNA polymerase II-blocking lesions from the transcribed strand of active genes. Acts as a key adapter that promotes recruitment of factors involved in TC-NER. Facilitates the ubiquitination of the elongating form of RNA polymerase II (RNA pol IIo) at DNA damage sites, thereby promoting RNA pol IIo backtracking and access by the TC-NER machinery to lesion sites. Also promotes stabilization of ERCC6/CSB by recruiting deubiquitinating enzyme USP7 to TC-NER complexes, preventing UV-induced degradation of ERCC6 by the proteasome. Mediates the recruitment of the TFIIH complex and other factors that are required for nucleotide excision repair to RNA polymerase II. Also required to inactivate stalled RNA polymerase II by blocking the access of TCEA1/TFIIS, thereby preventing reactivation of RNA polymerase II. Not involved in processing oxidative damage. The polypeptide is UV-stimulated scaffold protein A (Homo sapiens (Human)).